The following is a 313-amino-acid chain: tRNA-cytidine(32) 2-sulfurtransferase (313 aa).

The PP-loop motif signature appears at 60–65 (SGGKDS). C135, C138, and C226 together coordinate [4Fe-4S] cluster.

Belongs to the TtcA family. As to quaternary structure, homodimer. The cofactor is Mg(2+). [4Fe-4S] cluster serves as cofactor.

It localises to the cytoplasm. It catalyses the reaction cytidine(32) in tRNA + S-sulfanyl-L-cysteinyl-[cysteine desulfurase] + AH2 + ATP = 2-thiocytidine(32) in tRNA + L-cysteinyl-[cysteine desulfurase] + A + AMP + diphosphate + H(+). Its pathway is tRNA modification. Catalyzes the ATP-dependent 2-thiolation of cytidine in position 32 of tRNA, to form 2-thiocytidine (s(2)C32). The sulfur atoms are provided by the cysteine/cysteine desulfurase (IscS) system. In Delftia acidovorans (strain DSM 14801 / SPH-1), this protein is tRNA-cytidine(32) 2-sulfurtransferase.